A 239-amino-acid chain; its full sequence is Probable fimbrial chaperone YehC (239 aa).

The first 31 residues, 1-31, serve as a signal peptide directing secretion; sequence MAAIPWRPFNLRGIKMKGLLSLLIFSMVLPA.

This sequence belongs to the periplasmic pilus chaperone family.

Its subcellular location is the periplasm. Functionally, part of the yehABCD fimbrial operon. Could contribute to adhesion to various surfaces in specific environmental niches. The polypeptide is Probable fimbrial chaperone YehC (yehC) (Escherichia coli (strain K12)).